A 303-amino-acid chain; its full sequence is MSLLRITSSAHSSASSRLWRLGIFLLLSLPDSKGKAIWTAHLNITFQVGSRLISELGESGVFGNHSPLERVSGVVVLPEGWNQNACNPMTNFSRPGQTDPWLALIERGGCTFTRKINVAAEKGANGVIIYNYPGTGNKVFPMSHQGTENIVAVMIGNLKGMELLHLIQKGVYVKIIIEVGRMHMPWLSHYIMSLFTFLTATVAYLFLYCAWRPRGPNFSTRRQRQLKADVRKAIGKLQLRVLQEGDKELEPDEDNCVVCFDIYKPQDVVRILTCKHIFHKACIDPWLLAHRTCPMCKCDILQT.

A signal peptide spans 1–34 (MSLLRITSSAHSSASSRLWRLGIFLLLSLPDSKG). N-linked (GlcNAc...) asparagine glycosylation occurs at N43. Residues 65-167 (HSPLERVSGV…LKGMELLHLI (103 aa)) enclose the PA domain. A helical membrane pass occupies residues 186–208 (WLSHYIMSLFTFLTATVAYLFLY). Residues 256–297 (CVVCFDIYKPQDVVRILTCKHIFHKACIDPWLLAHRTCPMCK) form an RING-type; atypical zinc finger.

Its subcellular location is the membrane. The polypeptide is RING finger protein 148 (RNF148) (Bos taurus (Bovine)).